We begin with the raw amino-acid sequence, 236 residues long: Ribose-5-phosphate isomerase A (236 aa).

Substrate-binding positions include 28–31 (TGST), 83–86 (DGAD), and 96–99 (KGGG). Catalysis depends on Glu-105, which acts as the Proton acceptor. Substrate is bound at residue Lys-123.

The protein belongs to the ribose 5-phosphate isomerase family. In terms of assembly, homodimer.

It catalyses the reaction aldehydo-D-ribose 5-phosphate = D-ribulose 5-phosphate. Its pathway is carbohydrate degradation; pentose phosphate pathway; D-ribose 5-phosphate from D-ribulose 5-phosphate (non-oxidative stage): step 1/1. Functionally, catalyzes the reversible conversion of ribose-5-phosphate to ribulose 5-phosphate. In Afipia carboxidovorans (strain ATCC 49405 / DSM 1227 / KCTC 32145 / OM5) (Oligotropha carboxidovorans), this protein is Ribose-5-phosphate isomerase A.